A 116-amino-acid polypeptide reads, in one-letter code: CDKN2AIP N-terminal-like protein (116 aa).

N-acetylmethionine is present on Met-1. The 93-residue stretch at 24-116 (AEQFRSYSES…RSELMKKHQS (93 aa)) folds into the XRN2-binding (XTBD) domain.

Belongs to the CARF family. In terms of assembly, interacts with XRN2; the interaction is direct.

This Rattus norvegicus (Rat) protein is CDKN2AIP N-terminal-like protein (Cdkn2aipnl).